The chain runs to 836 residues: Transcriptional regulatory protein UME6 (836 aa).

A compositionally biased stretch (basic and acidic residues) spans 1 to 14; the sequence is MLDKARSQSKHMDE. Disordered regions lie at residues 1-77, 92-168, 218-332, and 381-464; these read MLDK…IESL, STCA…CNGH, HLPP…DDQC, and NESS…GFFY. Polar residues-rich tracts occupy residues 39-48, 61-77, and 92-112; these read SRATLMNSSQ, GANS…IESL, and STCA…SLKV. Position 114 is a phosphoserine (Ser-114). A compositionally biased stretch (basic and acidic residues) spans 117–126; the sequence is DIKDDPKEND. A phosphoserine mark is found at Ser-141, Ser-150, and Ser-228. The span at 226 to 236 shows a compositional bias: low complexity; it reads AVSSPGTTAAG. Residues 258–272 show a composition bias toward polar residues; that stretch reads TSANKNNGKTTNSPM. The span at 273–305 shows a compositional bias: low complexity; sequence SILSRNNSTNNNDNNSIQSSDSRESSNNNEIGG. Residues Ser-316 and Ser-318 each carry the phosphoserine modification. Residues 316 to 325 show a composition bias toward polar residues; sequence SPSNDSQVQH. The span at 381-398 shows a compositional bias: low complexity; that stretch reads NESSSNNASSNTDTPTNS. Residues 399–414 show a composition bias toward polar residues; that stretch reads RHANTSSSITSRNNFQ. The segment covering 426–446 has biased composition (low complexity); it reads PTSASSFTSTNNNNPQRNNIN. The tract at residues 508 to 594 is SIN3-binding; that stretch reads NSASSSTKLD…QPIFESNNST (87 aa). The disordered stretch occupies residues 636-766; sequence NGKRIDRRLS…ATSSTSQGTR (131 aa). Position 645 is a phosphoserine (Ser-645). Residues 670 to 679 are compositionally biased toward polar residues; the sequence is VASQTNSDYN. The span at 680-702 shows a compositional bias: low complexity; the sequence is SLGESSTSSAPSSPSLKASSGLA. Positions 718–739 are enriched in basic residues; sequence SKGKNVKPKAKSKAKQSSKKRP. Over residues 740-751 the composition is skewed to low complexity; sequence NNTTSKSKANNS. Residues 771-798 constitute a DNA-binding region (zn(2)-C6 fungal-type); that stretch reads CWICRLRKKKCTEERPHCFNCERLKLDC.

In terms of assembly, component of the RPD3C(L) complex composed of at least ASH1, CTI6, DEP1, PHO23, RPD3, RXT2, RXT3, SAP30, SDS3, SIN3, UME1 and UME6. Interacts with RIM11, MCK1 and IME1. In terms of processing, phosphorylated by RIM11 and MCK1.

The protein resides in the nucleus. In terms of biological role, component of the RPD3C(L) histone deacetylase complex (HDAC) responsible for the deacetylation of lysine residues on the N-terminal part of the core histones (H2A, H2B, H3 and H4). Histone deacetylation gives a tag for epigenetic repression and plays an important role in transcriptional regulation, cell cycle progression and developmental events. Binds to the URS1 site (5'-AGCCGCCGA-3') and recruits the RPD3 histone deacetylase complex to the promoters to negatively regulate the expression of many genes including CAR1 (arginase), several required for sporulation, mating type switching, inositol metabolism, and oxidative carbon metabolism. Also recruits the ISW2 chromatin remodeling complex to promoters in a second gene repression pathway. Associates with the master regulator of meiosis IME1 in order to activate the expression of meiosis genes. Has both a positive and negative role in regulating phospholipid biosynthesis. This chain is Transcriptional regulatory protein UME6 (UME6), found in Saccharomyces cerevisiae (strain ATCC 204508 / S288c) (Baker's yeast).